Reading from the N-terminus, the 439-residue chain is Type I secretion system membrane fusion protein PrsE (439 aa).

Residues 20–40 (LIGVSVLALALVAGVGGWAAT) form a helical membrane-spanning segment.

It belongs to the membrane fusion protein (MFP) (TC 8.A.1) family. Part of a type I secretion system composed of PrsD and PrsE.

Its subcellular location is the cell inner membrane. In terms of biological role, mediates secretion of glycanase ExsH. This chain is Type I secretion system membrane fusion protein PrsE (prsE), found in Rhizobium meliloti (strain 1021) (Ensifer meliloti).